A 377-amino-acid chain; its full sequence is L-arabinitol 4-dehydrogenase (377 aa).

Residues cysteine 66, histidine 91, glutamate 92, cysteine 121, cysteine 124, cysteine 127, cysteine 135, and glutamate 176 each contribute to the Zn(2+) site. NAD(+) contacts are provided by residues 203–204 (PI), aspartate 224, arginine 229, isoleucine 296, and 320–322 (QYR).

It belongs to the zinc-containing alcohol dehydrogenase family. In terms of assembly, homotetramer. Requires Zn(2+) as cofactor. The N-terminus is blocked.

It carries out the reaction L-arabinitol + NAD(+) = L-xylulose + NADH + H(+). It participates in carbohydrate degradation; L-arabinose degradation via L-arabinitol; D-xylulose 5-phosphate from L-arabinose (fungal route): step 2/5. Functionally, catalyzes the NAD-dependent oxidation of L-arabinitol to L-xylulose in the fungal L-arabinose catabolic pathway. L-arabinose catabolism is important for using plant material as a carbon source. Can partially compensate for xylitol dehydrogenase in xdh1 mutants. Also oxidizes galactitol to L-xylo-3-hexulose as an alternative to the standard Leloir pathway for D-galactose metabolism. NADP cannot act as a cosubstrate. The sequence is that of L-arabinitol 4-dehydrogenase (lad1) from Hypocrea jecorina (Trichoderma reesei).